The chain runs to 362 residues: CLIP domain-containing serine protease B10 (362 aa).

The first 19 residues, 1–19 (MAKVVDCVLLLAFIAVVRG), serve as a signal peptide directing secretion. Residues 22 to 75 (ACRTPDHRDGVCHPVQQCPSVRDEFFNSDRVLSEDEIDYLRKLQCKTKDVTICC) form the Clip domain. 3 disulfides stabilise this stretch: Cys-23–Cys-74, Cys-33–Cys-66, and Cys-39–Cys-75. The 252-residue stretch at 110–361 (IIGGNYTAID…YLDWIRQNIR (252 aa)) folds into the Peptidase S1 domain. Asn-114 is a glycosylation site (N-linked (GlcNAc...) asparagine). Cys-140 and Cys-156 are oxidised to a cystine. Residues His-155 and Asp-220 each act as charge relay system in the active site. N-linked (GlcNAc...) asparagine glycosylation is present at Asn-254. 2 cysteine pairs are disulfide-bonded: Cys-285–Cys-300 and Cys-310–Cys-337. Ser-314 acts as the Charge relay system in catalysis.

The protein belongs to the peptidase S1 family. CLIP subfamily. As to quaternary structure, forms a covalent heterodimer with SRPN2; the interaction inhibits CLIPB10 catalytic activity. Cleaved by an unknown protease into an active form.

It is found in the secreted. With respect to regulation, inhibited by serpin SRPN2. Its function is as follows. Serine protease which preferentially cleaves after arginine residues. Involved in the innate immune response against parasite P.bergei infection by activating the melanization cascade. Probably in the hemolymph, cleaves and activates prophenoloxidase (PPO), which functions in the formation of pigments such as melanin and other polyphenolic compounds. In the susceptible strain G3, appears to be dispensable for ookinete elimination which occurs by lysis. This chain is CLIP domain-containing serine protease B10, found in Anopheles gambiae (African malaria mosquito).